We begin with the raw amino-acid sequence, 320 residues long: uncharacterized protein (320 aa).

A disordered region spans residues 1 to 40 (MDHPSTSSLPRKKVKAGVKKAGKKTGKKTTGKKKTTPSAI). Over residues 10 to 35 (PRKKVKAGVKKAGKKTGKKTTGKKKT) the composition is skewed to basic residues. A helical transmembrane segment spans residues 51–71 (LLVLLAVLSYLAALSLGLYIM). Residues Asn-92, Asn-122, Asn-154, and Asn-167 are each glycosylated (N-linked (GlcNAc...) asparagine). The next 2 helical transmembrane spans lie at 186–206 (PLVHLLLFFVTGIMLFVAMTG) and 216–236 (MLVTAIALSAFSLALALVTVL). The N-linked (GlcNAc...) asparagine glycan is linked to Asn-247. The chain crosses the membrane as a helical span at residues 272 to 292 (VQGALVAIVAVFYLTMGVVFV).

It localises to the membrane. It participates in secondary metabolite biosynthesis; terpenoid biosynthesis. Functionally, part of the gene cluster that mediates the biosynthesis of an ophiobolin family sesterterpenoid. This is an uncharacterized protein from Aspergillus terreus.